The chain runs to 93 residues: Serine rich endogenous peptide 6 (93 aa).

Positions Met-1–Ser-27 are cleaved as a signal peptide. 2 short sequence motifs (SCOOP motif) span residues Gly-48–Ile-62 and Ile-73–Arg-87. The disordered stretch occupies residues Gly-52–Gly-93. The span at Ser-53–Tyr-66 shows a compositional bias: polar residues. Short sequence motifs (sxS motif essential for MIK2 binding) lie at residues Ser-54–Ser-56 and Ser-79–Ser-81.

The protein belongs to the serine rich endogenous peptide (SCOOP) phytocytokine family. As to quaternary structure, interacts with MIK2 (via extracellular leucine-rich repeat domain); this interaction triggers the formation of complex between MIK2 and the BAK1/SERK3 and SERK4 coreceptors, and subsequent BAK1 activation by phosphorylation. Mostly expressed in seedlings shoots, and, to a lower extent, in roots.

Its subcellular location is the cell membrane. It localises to the secreted. The protein resides in the extracellular space. The protein localises to the apoplast. In terms of biological role, brassicaceae-specific phytocytokine (plant endogenous peptide released into the apoplast) perceived by MIK2 in a BAK1/SERK3 and SERK4 coreceptors-dependent manner, that modulates various physiological and antimicrobial processes including growth prevention and reactive oxygen species (ROS) response regulation. Inhibits root growth. This chain is Serine rich endogenous peptide 6, found in Arabidopsis thaliana (Mouse-ear cress).